Consider the following 193-residue polypeptide: NADH-quinone oxidoreductase subunit B (193 aa).

Cys-72, Cys-73, Cys-137, and Cys-167 together coordinate [4Fe-4S] cluster.

The protein belongs to the complex I 20 kDa subunit family. NDH-1 is composed of 14 different subunits. Subunits NuoB, C, D, E, F, and G constitute the peripheral sector of the complex. The cofactor is [4Fe-4S] cluster.

The protein resides in the cell inner membrane. It catalyses the reaction a quinone + NADH + 5 H(+)(in) = a quinol + NAD(+) + 4 H(+)(out). Functionally, NDH-1 shuttles electrons from NADH, via FMN and iron-sulfur (Fe-S) centers, to quinones in the respiratory chain. The immediate electron acceptor for the enzyme in this species is believed to be ubiquinone. Couples the redox reaction to proton translocation (for every two electrons transferred, four hydrogen ions are translocated across the cytoplasmic membrane), and thus conserves the redox energy in a proton gradient. This is NADH-quinone oxidoreductase subunit B from Bradyrhizobium sp. (strain ORS 278).